A 244-amino-acid chain; its full sequence is Flavin-dependent thymidylate synthase (244 aa).

The ThyX domain occupies 7–199 (PRVFLIASWG…PNLARLVWED (193 aa)). FAD-binding positions include Ser60 and 83–85 (RHR). DUMP is bound by residues 80 to 83 (QFIR), 93 to 95 (SQR), and Arg137. The ThyX motif motif lies at 83–93 (RHRMASYWSES). Residues 153–155 (NAR) and Asn160 contribute to the FAD site. Arg165 serves as a coordination point for dUMP. The active-site Involved in ionization of N3 of dUMP, leading to its activation is the Arg165.

The protein belongs to the thymidylate synthase ThyX family. In terms of assembly, homotetramer. Requires FAD as cofactor.

The catalysed reaction is dUMP + (6R)-5,10-methylene-5,6,7,8-tetrahydrofolate + NADPH + H(+) = dTMP + (6S)-5,6,7,8-tetrahydrofolate + NADP(+). The protein operates within pyrimidine metabolism; dTTP biosynthesis. Functionally, catalyzes the reductive methylation of 2'-deoxyuridine-5'-monophosphate (dUMP) to 2'-deoxythymidine-5'-monophosphate (dTMP) while utilizing 5,10-methylenetetrahydrofolate (mTHF) as the methyl donor, and NADPH and FADH(2) as the reductant. This is Flavin-dependent thymidylate synthase from Pyrobaculum aerophilum (strain ATCC 51768 / DSM 7523 / JCM 9630 / CIP 104966 / NBRC 100827 / IM2).